The primary structure comprises 366 residues: UPF0324 membrane protein RSc1111 (366 aa).

Transmembrane regions (helical) follow at residues 21–43 (LAGA…TAWA), 103–125 (LGAS…GAWV), 137–159 (AVLV…APAV), 169–191 (AIAS…YALA), 198–220 (VAPA…VIAA), 240–262 (VLAL…LVLE), 283–305 (WFAA…ATWH), and 343–365 (AGVL…RWLA).

It belongs to the UPF0324 family.

It localises to the cell membrane. This is UPF0324 membrane protein RSc1111 from Ralstonia nicotianae (strain ATCC BAA-1114 / GMI1000) (Ralstonia solanacearum).